The sequence spans 160 residues: Regulatory protein RecX (160 aa).

It belongs to the RecX family.

It is found in the cytoplasm. Functionally, modulates RecA activity. This Pelodictyon phaeoclathratiforme (strain DSM 5477 / BU-1) protein is Regulatory protein RecX.